A 198-amino-acid chain; its full sequence is ATP-dependent Clp protease proteolytic subunit 2 (198 aa).

Residue serine 94 is the Nucleophile of the active site. Histidine 119 is a catalytic residue.

It belongs to the peptidase S14 family. In terms of assembly, fourteen ClpP subunits assemble into 2 heptameric rings which stack back to back to give a disk-like structure with a central cavity, resembling the structure of eukaryotic proteasomes.

The protein resides in the cytoplasm. It carries out the reaction Hydrolysis of proteins to small peptides in the presence of ATP and magnesium. alpha-casein is the usual test substrate. In the absence of ATP, only oligopeptides shorter than five residues are hydrolyzed (such as succinyl-Leu-Tyr-|-NHMec, and Leu-Tyr-Leu-|-Tyr-Trp, in which cleavage of the -Tyr-|-Leu- and -Tyr-|-Trp bonds also occurs).. Its function is as follows. Cleaves peptides in various proteins in a process that requires ATP hydrolysis. Has a chymotrypsin-like activity. Plays a major role in the degradation of misfolded proteins. This Borreliella burgdorferi (strain ATCC 35210 / DSM 4680 / CIP 102532 / B31) (Borrelia burgdorferi) protein is ATP-dependent Clp protease proteolytic subunit 2.